A 324-amino-acid polypeptide reads, in one-letter code: Viral cathepsin (324 aa).

Positions 1 to 16 are cleaved as a signal peptide; that stretch reads MNKIMLCLLVCGVVHA. Positions 17–113 are cleaved as a propeptide — activation peptide; sequence ATYDLLKAPN…VILDRPPDRG (97 aa). Cystine bridges form between cysteine 134-cysteine 175, cysteine 168-cysteine 208, and cysteine 263-cysteine 311. Residue cysteine 137 is part of the active site. Asparagine 159 is a glycosylation site (N-linked (GlcNAc...) asparagine; by host). Residues histidine 270 and asparagine 290 contribute to the active site.

It belongs to the peptidase C1 family. In terms of processing, synthesized as an inactive proenzyme and activated by proteolytic removal of the inhibitory propeptide.

It catalyses the reaction Endopeptidase of broad specificity, hydrolyzing substrates of both cathepsin L and cathepsin B.. Cysteine protease that plays an essential role in host liquefaction to facilitate horizontal transmission of the virus. May participate in the degradation of foreign protein expressed by the baculovirus system. The polypeptide is Viral cathepsin (VCATH) (Orgyia pseudotsugata (Douglas-fir tussock moth)).